The primary structure comprises 214 residues: Large ribosomal subunit protein uL16 (214 aa).

Arg32 is subject to Citrulline. Residue Lys175 forms a Glycyl lysine isopeptide (Lys-Gly) (interchain with G-Cter in SUMO2) linkage. Lys188 participates in a covalent cross-link: Glycyl lysine isopeptide (Lys-Gly) (interchain with G-Cter in ubiquitin).

Belongs to the universal ribosomal protein uL16 family. In terms of assembly, component of the large ribosomal subunit. Mature ribosomes consist of a small (40S) and a large (60S) subunit. The 40S subunit contains about 33 different proteins and 1 molecule of RNA (18S). The 60S subunit contains about 49 different proteins and 3 molecules of RNA (28S, 5.8S and 5S). Post-translationally, citrullinated by PADI4. Ufmylated by UFL1.

Its subcellular location is the cytoplasm. Its function is as follows. Component of the large ribosomal subunit. Plays a role in the formation of actively translating ribosomes. May play a role in the embryonic brain development. The protein is Large ribosomal subunit protein uL16 of Pongo abelii (Sumatran orangutan).